Reading from the N-terminus, the 600-residue chain is Mediator of RNA polymerase II transcription subunit 26 (600 aa).

The region spanning 10-87 (QIRDRLLQAI…RSWQKLIEPA (78 aa)) is the TFIIS N-terminal domain. 3 disordered regions span residues 99-330 (GATG…RRLE), 348-402 (HQRL…PRDY), and 431-461 (TRQIKPLTQKEPVRADSPVHMEQQSRTELDK). The span at 123–133 (SIHDLKSRNDL) shows a compositional bias: basic and acidic residues. The span at 175–197 (PNSSPLPTNGISGSPESFASSLD) shows a compositional bias: polar residues. The span at 207–218 (SRLERDENDKHS) shows a compositional bias: basic and acidic residues. Positions 314 to 324 (SPLPLAQPSTP) are enriched in pro residues. A compositionally biased stretch (basic and acidic residues) spans 441–461 (EPVRADSPVHMEQQSRTELDK). Ser-447, Ser-470, and Ser-535 each carry phosphoserine.

The protein belongs to the Mediator complex subunit 26 family. In terms of assembly, component of the Mediator complex, which is composed of MED1, MED4, MED6, MED7, MED8, MED9, MED10, MED11, MED12, MED13, MED13L, MED14, MED15, MED16, MED17, MED18, MED19, MED20, MED21, MED22, MED23, MED24, MED25, MED26, MED27, MED29, MED30, MED31, CCNC, CDK8 and CDC2L6/CDK11. The MED12, MED13, CCNC and CDK8 subunits form a distinct module termed the CDK8 module. Mediator containing the CDK8 module is less active than Mediator lacking this module in supporting transcriptional activation. Individual preparations of the Mediator complex lacking one or more distinct subunits have been variously termed ARC, CRSP, DRIP, PC2, SMCC and TRAP. Interacts with CEBPB (when not methylated).

The protein localises to the nucleus. Its function is as follows. Component of the Mediator complex, a coactivator involved in the regulated transcription of nearly all RNA polymerase II-dependent genes. Mediator functions as a bridge to convey information from gene-specific regulatory proteins to the basal RNA polymerase II transcription machinery. Mediator is recruited to promoters by direct interactions with regulatory proteins and serves as a scaffold for the assembly of a functional pre-initiation complex with RNA polymerase II and the general transcription factors. This Homo sapiens (Human) protein is Mediator of RNA polymerase II transcription subunit 26 (MED26).